Reading from the N-terminus, the 1241-residue chain is High-affinity potassium transport protein (1241 aa).

2 consecutive transmembrane segments (helical) span residues Asn49–Tyr70 and Ile78–Val98. The N-linked (GlcNAc...) asparagine glycan is linked to Asn100. The helical transmembrane segment at Ile107–Phe127 threads the bilayer. Disordered regions lie at residues Thr162–Asp241, Lys253–Asp316, and Glu329–Gln570. Positions Arg164–Val177 are enriched in polar residues. Basic and acidic residues-rich tracts occupy residues Gly181–Glu191 and Val199–Arg214. Over residues Asp215–Ser238 the composition is skewed to low complexity. N-linked (GlcNAc...) asparagine glycosylation is found at Asn223, Asn227, Asn233, Asn257, Asn274, Asn353, and Asn364. Polar residues-rich tracts occupy residues Asn268–Lys280 and Thr345–Glu365. A compositionally biased stretch (basic and acidic residues) spans Ser366–Ala375. The span at Asp380–Leu411 shows a compositional bias: polar residues. N-linked (GlcNAc...) asparagine glycosylation is found at Asn389 and Asn442. Composition is skewed to basic residues over residues Pro446 to Arg455 and His482 to Leu497. The segment covering Ser498–Asp509 has biased composition (polar residues). Residues Asn505 and Asn538 are each glycosylated (N-linked (GlcNAc...) asparagine). The segment covering Asn520 to Asp545 has biased composition (acidic residues). Residues Lys561–Gln570 are compositionally biased toward low complexity. 5 N-linked (GlcNAc...) asparagine glycosylation sites follow: Asn584, Asn660, Asn681, Asn691, and Asn741. The tract at residues Asn677 to Tyr714 is disordered. Residues Glu684–Ala708 are compositionally biased toward polar residues. Helical transmembrane passes span Ile784–Leu806, Val819–Leu840, Ser844–Ile864, Gly868–Ser888, and Cys904–Leu924. The N-linked (GlcNAc...) asparagine glycan is linked to Asn925. 2 helical membrane-spanning segments follow: residues Trp929–Tyr949 and Ser977–Ile997. The disordered stretch occupies residues Tyr1011–Thr1073. Residues Thr1021–Ser1041 are compositionally biased toward acidic residues. The span at Gly1050 to Arg1062 shows a compositional bias: basic residues. The next 2 membrane-spanning stretches (helical) occupy residues Gln1084 to Arg1104 and Val1117 to Tyr1137. N-linked (GlcNAc...) asparagine glycosylation occurs at Asn1141. Residues Asp1222–Asn1241 are disordered. Basic residues predominate over residues His1226–Asn1241.

This sequence belongs to the TrkH potassium transport family.

It is found in the membrane. Its function is as follows. This protein is required for high-affinity potassium transport. In Saccharomyces uvarum (Yeast), this protein is High-affinity potassium transport protein (TRK1).